The sequence spans 386 residues: Succinate--CoA ligase [ADP-forming] subunit beta (386 aa).

One can recognise an ATP-grasp domain in the interval 9-244 (KEILRSFGVP…LDEEDPAEVE (236 aa)). ATP contacts are provided by residues Lys-46, 53–55 (GRG), Glu-99, Ala-102, and Glu-107. Mg(2+) contacts are provided by Asn-199 and Asp-213. Substrate is bound by residues Asn-264 and 321–323 (GIM).

The protein belongs to the succinate/malate CoA ligase beta subunit family. As to quaternary structure, heterotetramer of two alpha and two beta subunits. Mg(2+) serves as cofactor.

It carries out the reaction succinate + ATP + CoA = succinyl-CoA + ADP + phosphate. The enzyme catalyses GTP + succinate + CoA = succinyl-CoA + GDP + phosphate. The protein operates within carbohydrate metabolism; tricarboxylic acid cycle; succinate from succinyl-CoA (ligase route): step 1/1. Its function is as follows. Succinyl-CoA synthetase functions in the citric acid cycle (TCA), coupling the hydrolysis of succinyl-CoA to the synthesis of either ATP or GTP and thus represents the only step of substrate-level phosphorylation in the TCA. The beta subunit provides nucleotide specificity of the enzyme and binds the substrate succinate, while the binding sites for coenzyme A and phosphate are found in the alpha subunit. The polypeptide is Succinate--CoA ligase [ADP-forming] subunit beta (Acidovorax ebreus (strain TPSY) (Diaphorobacter sp. (strain TPSY))).